We begin with the raw amino-acid sequence, 335 residues long: Magnesium-protoporphyrin IX monomethyl ester [oxidative] cyclase (335 aa).

Belongs to the AcsF family. Fe cation is required as a cofactor.

Its subcellular location is the plastid. The protein localises to the chloroplast. The catalysed reaction is Mg-protoporphyrin IX 13-monomethyl ester + 3 NADPH + 3 O2 + 2 H(+) = 3,8-divinyl protochlorophyllide a + 3 NADP(+) + 5 H2O. It functions in the pathway porphyrin-containing compound metabolism; chlorophyll biosynthesis (light-independent). Functionally, catalyzes the formation of the isocyclic ring in chlorophyll biosynthesis. Mediates the cyclase reaction, which results in the formation of divinylprotochlorophyllide (Pchlide) characteristic of all chlorophylls from magnesium-protoporphyrin IX 13-monomethyl ester (MgPMME). The protein is Magnesium-protoporphyrin IX monomethyl ester [oxidative] cyclase of Cyanidioschyzon merolae (strain NIES-3377 / 10D) (Unicellular red alga).